The primary structure comprises 68 residues: MPKHEFSVDMTCGGCAEAVSRVLNKLGGVEFNIDLPNKKVCIESEHSSDILLATLNKTGKAVSYLGPK.

An HMA domain is found at 1–63 (MPKHEFSVDM…TLNKTGKAVS (63 aa)). C12 and C15 together coordinate Cu cation. Phosphoserine is present on S47. N6-acetyllysine is present on K60.

Belongs to the ATX1 family. In terms of assembly, homodimer. Interacts with ATP7B. Interacts with ATP7A. Interacts (via dimer form) with SLC31A1 (via C-terminal domain); this interaction improves ATOX1 stability and controls intracellular Cu(I) levels.

Binds and deliver cytosolic copper to the copper ATPase proteins. May be important in cellular antioxidant defense. The protein is Copper transport protein ATOX1 of Rattus norvegicus (Rat).